Reading from the N-terminus, the 228-residue chain is Demethylmenaquinone methyltransferase (228 aa).

S-adenosyl-L-methionine contacts are provided by residues T62, D80, 100 to 101 (DA), and S117.

Belongs to the class I-like SAM-binding methyltransferase superfamily. MenG/UbiE family.

It catalyses the reaction a 2-demethylmenaquinol + S-adenosyl-L-methionine = a menaquinol + S-adenosyl-L-homocysteine + H(+). The protein operates within quinol/quinone metabolism; menaquinone biosynthesis; menaquinol from 1,4-dihydroxy-2-naphthoate: step 2/2. Its function is as follows. Methyltransferase required for the conversion of demethylmenaquinol (DMKH2) to menaquinol (MKH2). The polypeptide is Demethylmenaquinone methyltransferase (Mycolicibacterium gilvum (strain PYR-GCK) (Mycobacterium gilvum (strain PYR-GCK))).